A 439-amino-acid polypeptide reads, in one-letter code: Keratin, type I cytoskeletal 40 (439 aa).

The head stretch occupies residues 1–89; it reads MASDGSPSCC…CEEGSFNSNE (89 aa). An IF rod domain is found at 89–400; sequence EKETMQFLND…GLLEKEDSRL (312 aa). The tract at residues 90 to 124 is coil 1A; that stretch reads KETMQFLNDRLASYLERVRSLEENNAELECRIREQ. Residues 125-135 are linker 1; sequence CEPNAPLVCPD. The segment at 136 to 236 is coil 1B; it reads YQRYFDTIEE…HEEEVNLLRE (101 aa). Residues 237-252 form a linker 12 region; sequence QLGDRLSVELDTAPTV. Residues 253–396 form a coil 2 region; that stretch reads DLNKVLDEMR…NTYRGLLEKE (144 aa). The tract at residues 397–439 is tail; it reads DSRLPCNPGSGAPMPNSTCEPCSNSMCEPCSAYVICTVENCCA.

The protein belongs to the intermediate filament family. As to quaternary structure, heterotetramer of two type I and two type II keratins.

Functionally, may play a role in late hair differentiation. In Mus musculus (Mouse), this protein is Keratin, type I cytoskeletal 40 (Krt40).